Reading from the N-terminus, the 328-residue chain is Tetraacyldisaccharide 4'-kinase (328 aa).

55 to 62 contacts ATP; that stretch reads TAGGNGKT.

This sequence belongs to the LpxK family.

The enzyme catalyses a lipid A disaccharide + ATP = a lipid IVA + ADP + H(+). Its pathway is glycolipid biosynthesis; lipid IV(A) biosynthesis; lipid IV(A) from (3R)-3-hydroxytetradecanoyl-[acyl-carrier-protein] and UDP-N-acetyl-alpha-D-glucosamine: step 6/6. Its function is as follows. Transfers the gamma-phosphate of ATP to the 4'-position of a tetraacyldisaccharide 1-phosphate intermediate (termed DS-1-P) to form tetraacyldisaccharide 1,4'-bis-phosphate (lipid IVA). This Escherichia coli (strain K12 / MC4100 / BW2952) protein is Tetraacyldisaccharide 4'-kinase.